A 203-amino-acid chain; its full sequence is Large ribosomal subunit protein uL13 (203 aa).

N-acetylalanine is present on Ala-2. At Arg-59 the chain carries Citrulline. Phosphoserine is present on Ser-77. Arg-140 bears the Citrulline mark. Position 191 is an N6-acetyllysine (Lys-191).

It belongs to the universal ribosomal protein uL13 family. As to quaternary structure, component of the 60S ribosome. Component of the GAIT complex. Interacts with EIF4G1. Post-translationally, phosphorylation at Ser-77 upon interferon-gamma treatment in monocytes involves a DAPK1-DAPK3 kinase cascade and is causing release from the ribosome, association with the GAIT complex and subsequent involvement in transcript-selective translation inhibition. Citrullinated by PADI4.

It localises to the cytoplasm. Functionally, associated with ribosomes but is not required for canonical ribosome function and has extra-ribosomal functions. Component of the GAIT (gamma interferon-activated inhibitor of translation) complex which mediates interferon-gamma-induced transcript-selective translation inhibition in inflammation processes. Upon interferon-gamma activation and subsequent phosphorylation dissociates from the ribosome and assembles into the GAIT complex which binds to stem loop-containing GAIT elements in the 3'-UTR of diverse inflammatory mRNAs (such as ceruplasmin) and suppresses their translation. In the GAIT complex interacts with m7G cap-bound eIF4G at or near the eIF3-binding site and blocks the recruitment of the 43S ribosomal complex. Involved in methylation of rRNA. In Oryctolagus cuniculus (Rabbit), this protein is Large ribosomal subunit protein uL13 (RPL13A).